The chain runs to 270 residues: Formamidopyrimidine-DNA glycosylase (270 aa).

The active-site Schiff-base intermediate with DNA is the Pro-2. Glu-3 (proton donor) is an active-site residue. Lys-58 acts as the Proton donor; for beta-elimination activity in catalysis. Residues His-91, Arg-110, and Arg-151 each contribute to the DNA site. The segment at 236-270 (FVYGRGGQPCKVCGTALREVKLGQRASVYCPRCQR) adopts an FPG-type zinc-finger fold. Catalysis depends on Arg-260, which acts as the Proton donor; for delta-elimination activity.

The protein belongs to the FPG family. Monomer. Zn(2+) serves as cofactor.

The catalysed reaction is Hydrolysis of DNA containing ring-opened 7-methylguanine residues, releasing 2,6-diamino-4-hydroxy-5-(N-methyl)formamidopyrimidine.. It carries out the reaction 2'-deoxyribonucleotide-(2'-deoxyribose 5'-phosphate)-2'-deoxyribonucleotide-DNA = a 3'-end 2'-deoxyribonucleotide-(2,3-dehydro-2,3-deoxyribose 5'-phosphate)-DNA + a 5'-end 5'-phospho-2'-deoxyribonucleoside-DNA + H(+). Involved in base excision repair of DNA damaged by oxidation or by mutagenic agents. Acts as a DNA glycosylase that recognizes and removes damaged bases. Has a preference for oxidized purines, such as 7,8-dihydro-8-oxoguanine (8-oxoG). Has AP (apurinic/apyrimidinic) lyase activity and introduces nicks in the DNA strand. Cleaves the DNA backbone by beta-delta elimination to generate a single-strand break at the site of the removed base with both 3'- and 5'-phosphates. This is Formamidopyrimidine-DNA glycosylase from Pseudomonas putida (strain GB-1).